Here is a 392-residue protein sequence, read N- to C-terminus: Methylthioribose-1-phosphate isomerase (392 aa).

The active-site Proton donor is the D267.

It belongs to the eIF-2B alpha/beta/delta subunits family. MtnA subfamily.

It is found in the cytoplasm. Its subcellular location is the nucleus. The catalysed reaction is 5-(methylsulfanyl)-alpha-D-ribose 1-phosphate = 5-(methylsulfanyl)-D-ribulose 1-phosphate. It functions in the pathway amino-acid biosynthesis; L-methionine biosynthesis via salvage pathway; L-methionine from S-methyl-5-thio-alpha-D-ribose 1-phosphate: step 1/6. In terms of biological role, catalyzes the interconversion of methylthioribose-1-phosphate (MTR-1-P) into methylthioribulose-1-phosphate (MTRu-1-P). The sequence is that of Methylthioribose-1-phosphate isomerase from Blastomyces gilchristii (strain SLH14081) (Blastomyces dermatitidis).